Here is a 212-residue protein sequence, read N- to C-terminus: Adenylate kinase (212 aa).

An ATP-binding site is contributed by 10-15; sequence GAGKGT. Positions 30–59 are NMP; it reads STGDMFRAAMANQTEMGRLAKSYIDKGELV. Residues threonine 31, arginine 36, 57–59, 86–89, and glutamine 93 contribute to the AMP site; these read ELV and GYPR. Residues 127–159 are LID; sequence GRIINRKTGETFHKVFNPPVDYKEEDYYQREDD. ATP-binding positions include arginine 128 and 137–138; that span reads TF. AMP-binding residues include arginine 156 and arginine 167. Glutamine 195 is an ATP binding site.

This sequence belongs to the adenylate kinase family. In terms of assembly, monomer.

The protein localises to the cytoplasm. It catalyses the reaction AMP + ATP = 2 ADP. It functions in the pathway purine metabolism; AMP biosynthesis via salvage pathway; AMP from ADP: step 1/1. Catalyzes the reversible transfer of the terminal phosphate group between ATP and AMP. Plays an important role in cellular energy homeostasis and in adenine nucleotide metabolism. The sequence is that of Adenylate kinase from Streptococcus agalactiae serotype III (strain NEM316).